The chain runs to 239 residues: tRNA (guanine-N(7)-)-methyltransferase (239 aa).

S-adenosyl-L-methionine-binding residues include E69, E94, D121, and D144. D144 is an active-site residue. Residues K148, D180, and T217–E220 each bind substrate.

The protein belongs to the class I-like SAM-binding methyltransferase superfamily. TrmB family.

It carries out the reaction guanosine(46) in tRNA + S-adenosyl-L-methionine = N(7)-methylguanosine(46) in tRNA + S-adenosyl-L-homocysteine. It functions in the pathway tRNA modification; N(7)-methylguanine-tRNA biosynthesis. Its function is as follows. Catalyzes the formation of N(7)-methylguanine at position 46 (m7G46) in tRNA. This Alcanivorax borkumensis (strain ATCC 700651 / DSM 11573 / NCIMB 13689 / SK2) protein is tRNA (guanine-N(7)-)-methyltransferase.